A 241-amino-acid chain; its full sequence is uncharacterized protein (241 aa).

This sequence belongs to the AB hydrolase superfamily. AB hydrolase 2 family.

This is an uncharacterized protein from Schizosaccharomyces pombe (strain 972 / ATCC 24843) (Fission yeast).